A 351-amino-acid chain; its full sequence is MSKIEKITKQLQHEQADAAWITTPLNVFYFTGYRSEPHERLFALLITANGDQTLYCPKMEVEEVKNSPFEGKIIGYLDTENPFEIDPLSFNKLLIESEHLTVKRQRELTQNFGVQHYGDIDQTIKELRNIKNESEIENIREAAKLADKCIEIGTEFLKVGVTEREVVNHIENEIKKFGVSEMSFDTMVLFGDHAASPHGTPGERKLVKDEYVLFDLGVIYNHYCSDMTRTVKFGTPSEEAQTIYNIVLEAETNAIEAIRAGVPLQDIDKIARDIISDAGYGDYFPHRLGHGLGLEEHEYQDVSSTNSNLLEAGMVITIEPGIYVPNVAGVRIEDDILVTENGYEILTHYDK.

Mn(2+) is bound by residues Asp215, Asp226, His290, Glu319, and Glu333.

The protein belongs to the peptidase M24B family. Requires Mn(2+) as cofactor.

This is an uncharacterized protein from Staphylococcus haemolyticus (strain JCSC1435).